The chain runs to 394 residues: Quinolinate synthase (394 aa).

Histidine 57 and serine 74 together coordinate iminosuccinate. Residue cysteine 121 coordinates [4Fe-4S] cluster. Residues 153–155 (YMN) and serine 174 each bind iminosuccinate. Residue cysteine 250 participates in [4Fe-4S] cluster binding. Residues 276 to 278 (HPE) and threonine 293 each bind iminosuccinate. Position 340 (cysteine 340) interacts with [4Fe-4S] cluster.

This sequence belongs to the quinolinate synthase family. Type 3 subfamily. It depends on [4Fe-4S] cluster as a cofactor.

The protein localises to the cytoplasm. It carries out the reaction iminosuccinate + dihydroxyacetone phosphate = quinolinate + phosphate + 2 H2O + H(+). The protein operates within cofactor biosynthesis; NAD(+) biosynthesis; quinolinate from iminoaspartate: step 1/1. Its function is as follows. Catalyzes the condensation of iminoaspartate with dihydroxyacetone phosphate to form quinolinate. This Nocardioides sp. (strain ATCC BAA-499 / JS614) protein is Quinolinate synthase.